A 635-amino-acid chain; its full sequence is Threonine--tRNA ligase (635 aa).

The TGS domain maps to Met1 to Thr61. The catalytic stretch occupies residues Asp242–Pro532. Zn(2+) is bound by residues Cys333, His384, and His509.

The protein belongs to the class-II aminoacyl-tRNA synthetase family. Homodimer. It depends on Zn(2+) as a cofactor.

It localises to the cytoplasm. The catalysed reaction is tRNA(Thr) + L-threonine + ATP = L-threonyl-tRNA(Thr) + AMP + diphosphate + H(+). Catalyzes the attachment of threonine to tRNA(Thr) in a two-step reaction: L-threonine is first activated by ATP to form Thr-AMP and then transferred to the acceptor end of tRNA(Thr). Also edits incorrectly charged L-seryl-tRNA(Thr). This chain is Threonine--tRNA ligase, found in Clostridium botulinum (strain Langeland / NCTC 10281 / Type F).